Reading from the N-terminus, the 495-residue chain is Putative BTB/POZ domain-containing protein L98 (495 aa).

A BTB domain is found at 15 to 85 (SDLTIEFVDN…FYGIETTNDY (71 aa)).

It belongs to the mimivirus BTB/WD family.

The chain is Putative BTB/POZ domain-containing protein L98 from Acanthamoeba polyphaga (Amoeba).